The sequence spans 400 residues: NADH-quinone oxidoreductase subunit D (400 aa).

The protein belongs to the complex I 49 kDa subunit family. NDH-1 is composed of 14 different subunits. Subunits NuoB, C, D, E, F, and G constitute the peripheral sector of the complex.

Its subcellular location is the cell inner membrane. The enzyme catalyses a quinone + NADH + 5 H(+)(in) = a quinol + NAD(+) + 4 H(+)(out). In terms of biological role, NDH-1 shuttles electrons from NADH, via FMN and iron-sulfur (Fe-S) centers, to quinones in the respiratory chain. The immediate electron acceptor for the enzyme in this species is believed to be a menaquinone. Couples the redox reaction to proton translocation (for every two electrons transferred, four hydrogen ions are translocated across the cytoplasmic membrane), and thus conserves the redox energy in a proton gradient. The protein is NADH-quinone oxidoreductase subunit D of Chlorobaculum tepidum (strain ATCC 49652 / DSM 12025 / NBRC 103806 / TLS) (Chlorobium tepidum).